The primary structure comprises 383 residues: Putative glutamate--cysteine ligase 2 (383 aa).

It belongs to the glutamate--cysteine ligase type 2 family. YbdK subfamily.

The catalysed reaction is L-cysteine + L-glutamate + ATP = gamma-L-glutamyl-L-cysteine + ADP + phosphate + H(+). Its function is as follows. ATP-dependent carboxylate-amine ligase which exhibits weak glutamate--cysteine ligase activity. In Clavibacter sepedonicus (Clavibacter michiganensis subsp. sepedonicus), this protein is Putative glutamate--cysteine ligase 2.